The sequence spans 401 residues: Tumor necrosis factor receptor superfamily member 11B (401 aa).

A signal peptide spans 1-21; that stretch reads MNKWLCCALLVFLDIIEWTTQ. 4 TNFR-Cys repeats span residues 24–62, 65–105, 107–142, and 145–185; these read FPPK…KTLC, CPDY…NRVC, CEEG…NTVC, and CPDG…DNVC. 8 cysteine pairs are disulfide-bonded: Cys41–Cys54, Cys44–Cys62, Cys65–Cys80, Cys83–Cys97, Cys87–Cys105, Cys107–Cys118, Cys124–Cys142, and Cys145–Cys160. Residue Asn98 is glycosylated (N-linked (GlcNAc...) asparagine). N-linked (GlcNAc...) asparagine glycosylation is found at Asn165 and Asn178. A disulfide bridge links Cys166 with Cys185. 2 Death domains span residues 198–269 and 270–365; these read DVTL…MVKK and IIQD…THSL. Residue Asn289 is glycosylated (N-linked (GlcNAc...) asparagine).

As to quaternary structure, homodimer. Interacts with TNFSF10 and TNFSF11.

The protein resides in the secreted. Its function is as follows. Acts as a decoy receptor for TNFSF11/RANKL and thereby neutralizes its function in osteoclastogenesis. Inhibits the activation of osteoclasts and promotes osteoclast apoptosis in vitro. Bone homeostasis seems to depend on the local ratio between TNFSF11 and TNFRSF11B. May also play a role in preventing arterial calcification. May act as decoy receptor for TNFSF10/TRAIL and protect against apoptosis. TNFSF10/TRAIL binding blocks the inhibition of osteoclastogenesis. This chain is Tumor necrosis factor receptor superfamily member 11B (Tnfrsf11b), found in Rattus norvegicus (Rat).